The primary structure comprises 254 residues: Pyridoxine 5'-phosphate synthase (254 aa).

Residue Asn12 coordinates 3-amino-2-oxopropyl phosphate. 14–15 (DH) provides a ligand contact to 1-deoxy-D-xylulose 5-phosphate. Arg23 serves as a coordination point for 3-amino-2-oxopropyl phosphate. His48 serves as the catalytic Proton acceptor. 2 residues coordinate 1-deoxy-D-xylulose 5-phosphate: Arg50 and His55. Residue Glu75 is the Proton acceptor of the active site. Thr105 serves as a coordination point for 1-deoxy-D-xylulose 5-phosphate. His199 (proton donor) is an active-site residue. Residues Gly200 and 221–222 (GF) each bind 3-amino-2-oxopropyl phosphate.

Belongs to the PNP synthase family. As to quaternary structure, homooctamer; tetramer of dimers.

It is found in the cytoplasm. It catalyses the reaction 3-amino-2-oxopropyl phosphate + 1-deoxy-D-xylulose 5-phosphate = pyridoxine 5'-phosphate + phosphate + 2 H2O + H(+). It functions in the pathway cofactor biosynthesis; pyridoxine 5'-phosphate biosynthesis; pyridoxine 5'-phosphate from D-erythrose 4-phosphate: step 5/5. Functionally, catalyzes the complicated ring closure reaction between the two acyclic compounds 1-deoxy-D-xylulose-5-phosphate (DXP) and 3-amino-2-oxopropyl phosphate (1-amino-acetone-3-phosphate or AAP) to form pyridoxine 5'-phosphate (PNP) and inorganic phosphate. The protein is Pyridoxine 5'-phosphate synthase of Rhodopseudomonas palustris (strain HaA2).